A 67-amino-acid chain; its full sequence is Small, acid-soluble spore protein B (67 aa).

This sequence belongs to the alpha/beta-type SASP family.

In terms of biological role, SASP are bound to spore DNA. They are double-stranded DNA-binding proteins that cause DNA to change to an a-like conformation. They protect the DNA backbone from chemical and enzymatic cleavage and are thus involved in dormant spore's high resistance to UV light. The polypeptide is Small, acid-soluble spore protein B (sspB) (Bacillus subtilis (strain 168)).